Here is a 115-residue protein sequence, read N- to C-terminus: NADH-ubiquinone oxidoreductase chain 3 (115 aa).

A run of 3 helical transmembrane segments spans residues 4–24 (ALTL…AFWL), 55–75 (FFLV…LLPL), and 84–104 (LTTM…SLAY).

It belongs to the complex I subunit 3 family. As to quaternary structure, core subunit of respiratory chain NADH dehydrogenase (Complex I) which is composed of 45 different subunits. Interacts with TMEM186. Interacts with TMEM242.

The protein resides in the mitochondrion inner membrane. It catalyses the reaction a ubiquinone + NADH + 5 H(+)(in) = a ubiquinol + NAD(+) + 4 H(+)(out). In terms of biological role, core subunit of the mitochondrial membrane respiratory chain NADH dehydrogenase (Complex I) which catalyzes electron transfer from NADH through the respiratory chain, using ubiquinone as an electron acceptor. Essential for the catalytic activity of complex I. The sequence is that of NADH-ubiquinone oxidoreductase chain 3 from Phoca vitulina (Harbor seal).